The primary structure comprises 237 residues: Chloride intracellular channel protein 3 (237 aa).

Residues 1–89 (MAETTKLQLF…EEFLEETLGP (89 aa)) form a required for insertion into the membrane region. Positions 13–91 (ASEDGESVGH…FLEETLGPPD (79 aa)) constitute a GST N-terminal domain. Residues 23 to 26 (CPSC) carry the G-site motif. A disulfide bridge connects residues Cys23 and Cys26. Residues 25 to 45 (SCQRLFMVLLLKGVPFTLTTV) traverse the membrane as a helical segment. The GST C-terminal domain maps to 69–236 (DGDVKTDTLQ…LAAYQPAVHP (168 aa)). Ser160 carries the post-translational modification Phosphoserine.

This sequence belongs to the chloride channel CLIC family. As to quaternary structure, associated with the C-terminal of MAPK15.

The protein resides in the nucleus. It is found in the membrane. It localises to the cell membrane. The protein localises to the cytoplasm. Its subcellular location is the secreted. The protein resides in the extracellular space. It is found in the extracellular matrix. It carries out the reaction chloride(in) = chloride(out). Functionally, in the soluble state, catalyzes glutaredoxin-like thiol disulfide exchange reactions with reduced glutathione as electron donor. Reduced in a glutathione-dependent way and secreted into the extracellular matrix where it activates TGM2 and promotes blood vessel growth during tissue remodeling as occurs in tumorigenesis. Can reduce specific cysteines in TGM2 and regulate cofactor binding. Can insert into membranes and form outwardly rectifying chloride ion channels. May participate in cellular growth control. This is Chloride intracellular channel protein 3 from Mus musculus (Mouse).